Reading from the N-terminus, the 131-residue chain is Runt-related transcription factor 2 (131 aa).

The Runt domain maps to 1-10 (MRVGVPPQIP). The interval 1–75 (MRVGVPPQIP…SSTRGTGLPV (75 aa)) is disordered. Arg11 is subject to Asymmetric dimethylarginine. Polar residues-rich tracts occupy residues 13 to 36 (SLNSAPSPFNPQGQSQITDPRQAQ) and 43 to 70 (YDQSYPSYLSQMTSPSIHSTTPLSSTRG).

In terms of assembly, heterodimer of an alpha and a beta subunit. The alpha subunit binds DNA as a monomer and through the Runt domain. DNA-binding is increased by heterodimerization. Interacts with XRCC6 (Ku70) and XRCC5 (Ku80). Interacts with CCNB1, KAT6A and KAT6B. Interacts with HIVEP3. Interacts with IFI204. Interaction with SATB2; the interaction results in enhanced DNA binding and transactivation by these transcription factors. Binds to HIPK3. Interacts with FOXO1 (via a C-terminal region); the interaction inhibits RUNX2 transcriptional activity towards BGLAP. This interaction is prevented on insulin or IGF1 stimulation as FOXO1 is exported from the nucleus. Interacts with FOXP3. Interacts with TMEM119. Interacts with OLFM2. Interacts with IPO7; the interaction inhibits RUNX2 nuclear translocation in osteoblasts. In terms of processing, phosphorylated; probably by MAP kinases (MAPK). Phosphorylation by HIPK3 is required for the SPEN/MINT and FGF2 transactivation during osteoblastic differentiation.

Its subcellular location is the nucleus. It localises to the cytoplasm. In terms of biological role, transcription factor involved in osteoblastic differentiation and skeletal morphogenesis. Essential for the maturation of osteoblasts and both intramembranous and endochondral ossification. CBF binds to the core site, 5'-PYGPYGGT-3', of a number of enhancers and promoters, including murine leukemia virus, polyomavirus enhancer, T-cell receptor enhancers, osteocalcin, osteopontin, bone sialoprotein, alpha 1(I) collagen, LCK, IL-3 and GM-CSF promoters. Inhibits KAT6B-dependent transcriptional activation. In osteoblasts, supports transcription activation: synergizes with SPEN/MINT to enhance FGFR2-mediated activation of the osteocalcin FGF-responsive element (OCFRE). The chain is Runt-related transcription factor 2 (RUNX2) from Equus caballus (Horse).